The chain runs to 767 residues: ATP-dependent rRNA helicase SPB4 (767 aa).

The Q motif signature appears at 28 to 56 (WTKLTPPLTPWVVSLLSDLGFGQMTPVQA). A Helicase ATP-binding domain is found at 59–291 (IPLFVSHKDV…RIGLRNPVRV (233 aa)). 72–79 (AVTGSGKT) lines the ATP pocket. The disordered stretch occupies residues 132–176 (HVQAQQQQDQDEQDEQDEQEAQSDSDTDPDASTALNNKRKSSNHL). The segment covering 140-160 (DQDEQDEQDEQEAQSDSDTDP) has biased composition (acidic residues). The DEAD box signature appears at 239 to 242 (DEAD). The region spanning 330–507 (QLARIVLFES…ILEPAEDDAS (178 aa)) is the Helicase C-terminal domain. A disordered region spans residues 609–767 (KLSGDQAKPP…NADAEPFFVI (159 aa)). Basic and acidic residues-rich tracts occupy residues 636 to 645 (CDSHDSDDAH) and 659 to 681 (LERE…ANRE). Residues 654–746 (KNKRKLEREK…RANSDNDDAM (93 aa)) adopt a coiled-coil conformation. Polar residues predominate over residues 690-700 (LKTQAAESSSN). Residues 701–746 (AKHEPPQDDHDEHDWNDDYRKLQKDKRQQRQRNKADRANSDNDDAM) are compositionally biased toward basic and acidic residues. A compositionally biased stretch (low complexity) spans 749–761 (NSDSDAAAANADA).

This sequence belongs to the DEAD box helicase family. DDX55/SPB4 subfamily. Component of pre-60S ribosomal complexes.

It is found in the nucleus. The protein resides in the nucleolus. It carries out the reaction ATP + H2O = ADP + phosphate + H(+). In terms of biological role, ATP-binding RNA helicase involved in the biogenesis of 60S ribosomal subunits. Binds 90S pre-ribosomal particles and dissociates from pre-60S ribosomal particles after processing of 27SB pre-rRNA. Required for the normal formation of 18S rRNA through the processing of pre-rRNAs at sites A0, A1 and A2, and the normal formation of 25S and 5.8S rRNAs through the processing of pre-rRNAs at sites C1 and C2. This Mycosarcoma maydis (Corn smut fungus) protein is ATP-dependent rRNA helicase SPB4.